The primary structure comprises 409 residues: 5-aminolevulinate synthase (409 aa).

Residues Arg-21 and Ser-136 each coordinate substrate. Ser-188, His-216, and Thr-244 together coordinate pyridoxal 5'-phosphate. Residue Lys-247 is part of the active site. Lys-247 bears the N6-(pyridoxal phosphate)lysine mark. 2 residues coordinate pyridoxal 5'-phosphate: Thr-276 and Thr-277. Substrate is bound at residue Thr-362.

Belongs to the class-II pyridoxal-phosphate-dependent aminotransferase family. As to quaternary structure, homodimer. Requires pyridoxal 5'-phosphate as cofactor.

It carries out the reaction succinyl-CoA + glycine + H(+) = 5-aminolevulinate + CO2 + CoA. It functions in the pathway porphyrin-containing compound metabolism; protoporphyrin-IX biosynthesis; 5-aminolevulinate from glycine: step 1/1. This chain is 5-aminolevulinate synthase (hemA), found in Bradyrhizobium diazoefficiens (strain JCM 10833 / BCRC 13528 / IAM 13628 / NBRC 14792 / USDA 110).